A 94-amino-acid polypeptide reads, in one-letter code: Small ribosomal subunit protein bS6 (94 aa).

Belongs to the bacterial ribosomal protein bS6 family.

In terms of biological role, binds together with bS18 to 16S ribosomal RNA. In Desulforudis audaxviator (strain MP104C), this protein is Small ribosomal subunit protein bS6.